Reading from the N-terminus, the 1201-residue chain is Autophagy-related protein 11 (1201 aa).

The tract at residues 90–109 (FPFLGRPSTPTKGSDNSTGT) is disordered. A compositionally biased stretch (polar residues) spans 97 to 109 (STPTKGSDNSTGT). A coiled-coil region spans residues 418–452 (LLRSDDMVRSLRDEKSKLEEKVKGSESRIRKLEDL). Disordered stretches follow at residues 458–503 (HMGR…SEEK) and 525–545 (KLQK…QEVQ). The segment covering 485–499 (RRSSVSSRRMSSNQS) has biased composition (low complexity). A compositionally biased stretch (basic and acidic residues) spans 525 to 542 (KLQKDAHAERQSNTDKIQ). Coiled coils occupy residues 566-670 (RRFL…ALQA) and 710-828 (SAKA…WKER). 2 disordered regions span residues 1052 to 1076 (SMNG…DDEN) and 1115 to 1201 (DARG…LQGP). Residues 1133–1166 (RTLSKSLDSRRNSSNSKKGPATPSQRGNDSTTDL) are compositionally biased toward polar residues. The span at 1191-1201 (EEVRRDQLQGP) shows a compositional bias: basic and acidic residues.

It belongs to the ATG11 family. Homodimer and potential homooligomers.

The protein resides in the preautophagosomal structure membrane. Selective autophagy-specific protein required for pexophagy and mitophagy. In contrast to its Saccharomyces cerevisiae ATG11 ortholog, is not involved in non-selective autophagy nor in cytoplasm to vacuole transport (Cvt). The protein is Autophagy-related protein 11 of Aspergillus oryzae (strain ATCC 42149 / RIB 40) (Yellow koji mold).